The chain runs to 985 residues: Ephrin type-B receptor 1-A (985 aa).

The N-terminal stretch at 1 to 19 (MELNVLLLLLCLSGGQVGA) is a signal peptide. At 20-542 (VEETLMDTRT…YKSELREQLP (523 aa)) the chain is on the extracellular side. In terms of domain architecture, Eph LBD spans 21–203 (EETLMDTRTA…FFKEMPSVVQ (183 aa)). 2 Fibronectin type-III domains span residues 324–434 (VPSG…TNQA) and 435–532 (APSS…TAED). N-linked (GlcNAc...) asparagine glycosylation is found at Asn336, Asn428, and Asn482. Residues 543–563 (LTGSAAAGVVFIVSLVAISIV) traverse the membrane as a helical segment. The Cytoplasmic portion of the chain corresponds to 564–985 (CSRKRTYSKE…QITQSPTSIA (422 aa)). Positions 620-883 (VKIEEVIGAG…EIVNTLRPMI (264 aa)) constitute a Protein kinase domain. ATP contacts are provided by residues 626-634 (IGAGEFGEV) and Lys652. Residue Asp745 is the Proton acceptor of the active site. The SAM domain maps to 912–976 (SAFTSVDDWL…LNSIQSMRVQ (65 aa)). The short motif at 983–985 (SIA) is the PDZ-binding element.

It belongs to the protein kinase superfamily. Tyr protein kinase family. Ephrin receptor subfamily. As to quaternary structure, heterotetramer upon binding of the ligand. The heterotetramer is composed of an ephrin dimer and a receptor dimer. Oligomerization is probably required to induce biological responses. Post-translationally, phosphorylated. Autophosphorylation is stimulated by ligands.

It localises to the cell membrane. It is found in the early endosome membrane. Its subcellular location is the cell projection. The protein resides in the dendrite. The enzyme catalyses L-tyrosyl-[protein] + ATP = O-phospho-L-tyrosyl-[protein] + ADP + H(+). Functionally, receptor tyrosine kinase which binds promiscuously transmembrane ephrin-B family ligands residing on adjacent cells, leading to contact-dependent bidirectional signaling into neighboring cells. The signaling pathway downstream of the receptor is referred to as forward signaling while the signaling pathway downstream of the ephrin ligand is referred to as reverse signaling. May play a role in axon guidance during nervous system development. May also play an important redundant role with other ephrin-B receptors in development and maturation of dendritic spines and synapse formation. More generally, may play a role in targeted cell migration and adhesion. Upon activation by ephrin-B ligands activates the MAPK/ERK and the JNK signaling cascades to regulate cell migration and adhesion respectively. The polypeptide is Ephrin type-B receptor 1-A (ephb1-a) (Xenopus laevis (African clawed frog)).